Consider the following 424-residue polypeptide: MIVLILVFRLVIGEQMIDVLGPEKRRRRTTQEKIAIVQQSFEPGMTVSLVARQHGVAASQLFLWRKQYQEGSLTAVAAGEQVVPASELAAAMKQIKELQRLLGKKTMENELLKEAVEYGRAKKWIAHAPLIARGWGVSLVSRCLRVSRAQLHVILRRTDDWMDGRRSRHTDDTDVLLRIHHVIGELPTYGYRRVWALLRRQAELDGMPAINAKRVYRIMRQNALLLERKPAVPPSKRAHTGRVAVKESNQRWCSDGFEFCCDNGERLRVTFALDCCDREALHWAVTTGGFNSETVQDVMLGAVERRFGNDLPSSPVEWLTDNGSCYRANETRQFARMLGLEPKNTAVRSPESNGIAESFVKTIKRDYISIMPKPDGLTAAKNLAEAFEHYNEWHPHSALGYRSPREYLRHGACNGLSDNRCLEI.

Positions 229-412 constitute an Integrase catalytic domain; the sequence is KPAVPPSKRA…SPREYLRHGA (184 aa).

This sequence belongs to the transposase 8 family.

The chain is Insertion element IS2A uncharacterized 48.2 kDa protein from Escherichia coli.